The primary structure comprises 911 residues: MVDYHAANQAYQYGPSSGGNGTGGGGGMGDYMAQEDDWDRDLLLDPAWEKQQRKTFTAWCNSHLRKAGTQIENIDEDFRDGLKLMLLLEVISGERLPKPERGKMRVHKINNVNKALDFIASKGVKLVSIGAEEIVDGNAKMTLGMIWTIILRFAIQDISVEETSAKEGLLLWCQRKTAPYKNVNVQNFHISWKDGLAFNALIHRHRPELIEYDKLRKDDPVTNLNNAFEVAEKYLDIPKMLDAEDIVNTARPDEKAIMTYVSSFYHAFSGAQKAETAANRICKVLAVNQENEHLMEDYERLASDLLEWIRRTIPWLEDRVPQKTIQEMQQKLEDFRDYRRVHKPPKVQEKCQLEINFNTLQTKLRLSNRPAFMPSEGRMVSDINNGWQHLEQAEKGYEEWLLNEIRRLERLDHLAEKFRQKASIHEAWTDGKEAMLKHRDYETATLSDIKALIRKHEAFESDLAAHQDRVEQIAAIAQELNELDYYDSHNVNTRCQKICDQWDNLGSLTHSRREALEKTEKQLETIDQLHLEYAKRAAPFNNWMESAMEDLQDMFIVHTIEEIEGLISAHDQFKSTLPDADREREAILAIHKEAQRIAESNHIKLSGSNPYTSVTPQIINSKWEKVQQLVPKRDHALLEEQSKQQSNEHLRRQFASQANMVGPWIQTKMEEIGRISIEMNGTLEDQLSHLKQYERSIVDYKPNLDLLEQQHQLIQEALIFDNKHTNYTMEHLRVGWEQLLTTIARTINEVENQILTRDAKGISQEQMQEFRASFNHFDKDHGGALGPEEFKACLISLGYDVENDRQGDAEFNRIMSVVDPNHSGLVTFQAFIDFMSRETTDTDTADQVIASFKVLAGDKNFITAEELRRELPPDQAEYCIARMAPYQGPDAAPGALDYKSFSTALYGESDL.

Positions 1–269 (MVDYHAANQA…YVSSFYHAFS (269 aa)) are actin-binding. Positions 12-26 (QYGPSSGGNGTGGGG) are interaction with VCL. The segment at 12-31 (QYGPSSGGNGTGGGGGMGDY) is disordered. Residues 16–29 (SSGGNGTGGGGGMG) show a composition bias toward gly residues. Phosphotyrosine is present on Tyr-31. Residues 40–61 (RDLLLDPAWEKQQRKTFTAWCN) form an interaction with VCL region. 2 Calponin-homology (CH) domains span residues 50–154 (KQQR…LRFA) and 163–269 (TSAK…HAFS). The LXXLL motif motif lies at 84–88 (LMLLL). The segment at 108-126 (KINNVNKALDFIASKGVKL) is interaction with VCL. At Lys-114 the chain carries N6-acetyllysine. Residues 177 to 192 (TAPYKNVNVQNFHISW) form a polyphosphoinositide (PIP2)-binding region. Lys-214 carries the post-translational modification N6-acetyllysine. The residue at position 249 (Thr-249) is a Phosphothreonine. Spectrin repeat units lie at residues 293-403 (HLME…WLLN), 413-518 (HLAE…ALEK), 528-639 (QLHL…ALLE), and 649-752 (HLRR…EVEN). Residues Lys-592 and Lys-625 each carry the N6-acetyllysine modification. Ser-696 is modified (phosphoserine). Positions 736-911 (WEQLLTTIAR…STALYGESDL (176 aa)) are mediates interaction with MICALL2. EF-hand domains are found at residues 765–800 (EQMQEFRASFNHFDKDHGGALGPEEFKACLISLGYD) and 806–841 (QGDAEFNRIMSVVDPNHSGLVTFQAFIDFMSRETTD). Asp-778 provides a ligand contact to Ca(2+). N6-acetyllysine is present on Lys-779. Ca(2+)-binding residues include Asp-780 and Glu-789. Residue Lys-859 is modified to N6-acetyllysine. Ser-909 is subject to Phosphoserine.

This sequence belongs to the alpha-actinin family. As to quaternary structure, homodimer; antiparallel. Interacts with MAGI1. Interacts with MICALL2 (preferentially in opened conformation); stimulated by RAB13 activation. Identified in a IGF2BP1-dependent mRNP granule complex containing untranslated mRNAs. Component of the CART complex, at least composed of ACTN4, HGS/HRS, MYO5B and TRIM3. Binds TRIM3 at the N-terminus. Interacts with PDLIM2. Identified in a complex with CASK, IQGAP1, MAGI2, NPHS1, SPTAN1 and SPTBN1. Interacts with PPARG and RARA. Binds to VCL; this interaction triggers VCL conformational changes. Interacts with SEPTIN14. Interacts with IGSF8. As to expression, expressed in the foot process layer of podocytes in the kidney glomerulus but not in tubules (at protein level).

The protein resides in the nucleus. It localises to the cytoplasm. Its subcellular location is the cell junction. The protein localises to the cytoskeleton. It is found in the stress fiber. The protein resides in the perinuclear region. Its function is as follows. F-actin cross-linking protein which is thought to anchor actin to a variety of intracellular structures. This is a bundling protein. Probably involved in vesicular trafficking via its association with the CART complex. The CART complex is necessary for efficient transferrin receptor recycling but not for EGFR degradation. Involved in tight junction assembly in epithelial cells probably through interaction with MICALL2. Links MICALL2 to the actin cytoskeleton and recruits it to the tight junctions. May also function as a transcriptional coactivator, stimulating transcription mediated by the nuclear hormone receptors PPARG and RARA. Association with IGSF8 regulates the immune synapse formation and is required for efficient T-cell activation. The polypeptide is Alpha-actinin-4 (Rattus norvegicus (Rat)).